We begin with the raw amino-acid sequence, 819 residues long: DNA topoisomerase 4 subunit A (819 aa).

Residues 30–496 (LPDIRDGLKP…QIIEIDTASL (467 aa)) form the Topo IIA-type catalytic domain. Catalysis depends on Y118, which acts as the O-(5'-phospho-DNA)-tyrosine intermediate.

This sequence belongs to the type II topoisomerase GyrA/ParC subunit family. ParC type 2 subfamily. In terms of assembly, heterotetramer composed of ParC and ParE.

It is found in the cell membrane. It catalyses the reaction ATP-dependent breakage, passage and rejoining of double-stranded DNA.. Its function is as follows. Topoisomerase IV is essential for chromosome segregation. It relaxes supercoiled DNA. Performs the decatenation events required during the replication of a circular DNA molecule. The polypeptide is DNA topoisomerase 4 subunit A (Streptococcus pyogenes serotype M1).